The primary structure comprises 172 residues: 3-hydroxydecanoyl-[acyl-carrier-protein] dehydratase (172 aa).

The active site involves H71.

Belongs to the thioester dehydratase family. FabA subfamily. As to quaternary structure, homodimer.

The protein localises to the cytoplasm. It catalyses the reaction a (3R)-hydroxyacyl-[ACP] = a (2E)-enoyl-[ACP] + H2O. It carries out the reaction (3R)-hydroxydecanoyl-[ACP] = (2E)-decenoyl-[ACP] + H2O. The catalysed reaction is (2E)-decenoyl-[ACP] = (3Z)-decenoyl-[ACP]. It participates in lipid metabolism; fatty acid biosynthesis. Functionally, necessary for the introduction of cis unsaturation into fatty acids. Catalyzes the dehydration of (3R)-3-hydroxydecanoyl-ACP to E-(2)-decenoyl-ACP and then its isomerization to Z-(3)-decenoyl-ACP. Can catalyze the dehydratase reaction for beta-hydroxyacyl-ACPs with saturated chain lengths up to 16:0, being most active on intermediate chain length. The protein is 3-hydroxydecanoyl-[acyl-carrier-protein] dehydratase of Brucella ovis (strain ATCC 25840 / 63/290 / NCTC 10512).